Reading from the N-terminus, the 378-residue chain is tRNA (guanine(26)-N(2))-dimethyltransferase (378 aa).

In terms of domain architecture, Trm1 methyltransferase spans 4–374 (KEVTEGKVRI…KEYEEITKCI (371 aa)). Positions 44, 69, 87, 114, and 115 each coordinate S-adenosyl-L-methionine. Zn(2+) contacts are provided by Cys-246, Cys-249, Cys-263, and Cys-266.

The protein belongs to the class I-like SAM-binding methyltransferase superfamily. Trm1 family.

The catalysed reaction is guanosine(26) in tRNA + 2 S-adenosyl-L-methionine = N(2)-dimethylguanosine(26) in tRNA + 2 S-adenosyl-L-homocysteine + 2 H(+). Functionally, dimethylates a single guanine residue at position 26 of a number of tRNAs using S-adenosyl-L-methionine as donor of the methyl groups. This Saccharolobus solfataricus (strain ATCC 35092 / DSM 1617 / JCM 11322 / P2) (Sulfolobus solfataricus) protein is tRNA (guanine(26)-N(2))-dimethyltransferase.